We begin with the raw amino-acid sequence, 907 residues long: Protein translocase subunit SecA (907 aa).

Residues glutamine 87, 105–109, and aspartate 512 contribute to the ATP site; that span reads GEGKT. The segment at 834-907 is disordered; the sequence is QEDVERMEEQ…KKYKQCHGKI (74 aa). 2 stretches are compositionally biased toward basic and acidic residues: residues 836–853 and 873–888; these read DVERMEEQRRLQAEEAAR and EEAHSPMVREERKVGR. Zn(2+) is bound by residues cysteine 892, cysteine 894, cysteine 903, and histidine 904. Positions 898-907 are enriched in basic residues; the sequence is KKYKQCHGKI.

Belongs to the SecA family. As to quaternary structure, monomer and homodimer. Part of the essential Sec protein translocation apparatus which comprises SecA, SecYEG and auxiliary proteins SecDF-YajC and YidC. The cofactor is Zn(2+).

The protein resides in the cell inner membrane. Its subcellular location is the cytoplasm. It carries out the reaction ATP + H2O + cellular proteinSide 1 = ADP + phosphate + cellular proteinSide 2.. Functionally, part of the Sec protein translocase complex. Interacts with the SecYEG preprotein conducting channel. Has a central role in coupling the hydrolysis of ATP to the transfer of proteins into and across the cell membrane, serving both as a receptor for the preprotein-SecB complex and as an ATP-driven molecular motor driving the stepwise translocation of polypeptide chains across the membrane. The chain is Protein translocase subunit SecA from Aliivibrio fischeri (strain MJ11) (Vibrio fischeri).